We begin with the raw amino-acid sequence, 158 residues long: SsrA-binding protein (158 aa).

It belongs to the SmpB family.

Its subcellular location is the cytoplasm. Its function is as follows. Required for rescue of stalled ribosomes mediated by trans-translation. Binds to transfer-messenger RNA (tmRNA), required for stable association of tmRNA with ribosomes. tmRNA and SmpB together mimic tRNA shape, replacing the anticodon stem-loop with SmpB. tmRNA is encoded by the ssrA gene; the 2 termini fold to resemble tRNA(Ala) and it encodes a 'tag peptide', a short internal open reading frame. During trans-translation Ala-aminoacylated tmRNA acts like a tRNA, entering the A-site of stalled ribosomes, displacing the stalled mRNA. The ribosome then switches to translate the ORF on the tmRNA; the nascent peptide is terminated with the 'tag peptide' encoded by the tmRNA and targeted for degradation. The ribosome is freed to recommence translation, which seems to be the essential function of trans-translation. This is SsrA-binding protein from Acinetobacter baumannii (strain AB307-0294).